A 122-amino-acid chain; its full sequence is Large ribosomal subunit protein bL12 (122 aa).

It belongs to the bacterial ribosomal protein bL12 family. In terms of assembly, homodimer. Part of the ribosomal stalk of the 50S ribosomal subunit. Forms a multimeric L10(L12)X complex, where L10 forms an elongated spine to which 2 to 4 L12 dimers bind in a sequential fashion. Binds GTP-bound translation factors.

In terms of biological role, forms part of the ribosomal stalk which helps the ribosome interact with GTP-bound translation factors. Is thus essential for accurate translation. This chain is Large ribosomal subunit protein bL12, found in Xylella fastidiosa (strain M23).